The sequence spans 432 residues: Trigger factor (432 aa).

The region spanning 161–246 (GSRATIDFVG…LNKVEARELP (86 aa)) is the PPIase FKBP-type domain.

This sequence belongs to the FKBP-type PPIase family. Tig subfamily.

The protein resides in the cytoplasm. The catalysed reaction is [protein]-peptidylproline (omega=180) = [protein]-peptidylproline (omega=0). In terms of biological role, involved in protein export. Acts as a chaperone by maintaining the newly synthesized protein in an open conformation. Functions as a peptidyl-prolyl cis-trans isomerase. This chain is Trigger factor, found in Vibrio atlanticus (strain LGP32) (Vibrio splendidus (strain Mel32)).